A 507-amino-acid chain; its full sequence is ATP synthase subunit beta (507 aa).

The segment at 1–22 (MSSLANKAKSKGKSSKSKSNVN) is disordered. Position 183–190 (183–190 (GGAGVGKT)) interacts with ATP.

This sequence belongs to the ATPase alpha/beta chains family. As to quaternary structure, F-type ATPases have 2 components, CF(1) - the catalytic core - and CF(0) - the membrane proton channel. CF(1) has five subunits: alpha(3), beta(3), gamma(1), delta(1), epsilon(1). CF(0) has three main subunits: a(1), b(2) and c(9-12). The alpha and beta chains form an alternating ring which encloses part of the gamma chain. CF(1) is attached to CF(0) by a central stalk formed by the gamma and epsilon chains, while a peripheral stalk is formed by the delta and b chains.

The protein resides in the cell inner membrane. The catalysed reaction is ATP + H2O + 4 H(+)(in) = ADP + phosphate + 5 H(+)(out). Functionally, produces ATP from ADP in the presence of a proton gradient across the membrane. The catalytic sites are hosted primarily by the beta subunits. The polypeptide is ATP synthase subunit beta (Ehrlichia canis (strain Jake)).